The chain runs to 100 residues: MRKMMQREVTYTTAQLARMKMVDGEVTAEVLEPVTLIGNLSVEQAQREINKRSEFKENPAQVVGVEANTQLYELPLDVFLEHATVKERPATKEEVAEVQA.

A DNA-binding region spans residues 1–19 (MRKMMQREVTYTTAQLARM).

In terms of assembly, homodimer. Homomultimer. Binds to double-stranded DNA giving rise to multimeric nucleoprotein complexes.

Its function is as follows. Histone-like nucleoprotein that binds to the viral dsDNA and responsible for wrapping and condensing the viral DNA about 4-fold. Forms a nucleoprotein complex in which the DNA adopts a right-handed toroidal conformation winding around a protein core. Binding specificity for the viral genome is based on supercoiling. The formation of the nucleoprotein complex at the genome ends, for which the binding affinity is highest, activates the initiation of viral DNA replication. The binding of p6 would recruit the complex formed by the TP and the DNA polymerase to the origin. Protein p6 is also involved in the early to late transcription switch. The protein is Double-stranded DNA-binding protein of Bacillus phage Nf (Bacteriophage Nf).